The primary structure comprises 599 residues: MLSDLKQNLRSYFSSRILILALAIASIISVCTTFYVISLEAKNFSTIIGFLLIDLAIFLILGILLTQKFFTKNNDNDSSKLQNRIVIAFSLVAAIPTIIVSVFSVYFFNLSVKAWFDKKISTVLDQSVIVAETYIAEHKVQLKETALAVAEDLSDMYYDLIHNPALFTKTLNTEADMRSLDEAIVLNKSTNTIVANSYLSFSLSFATIPAHLIKKADLGEPVEVKSDPTTIRMLIKLKEYNDVYLLVGRLVDNKIIDHIDATNGAAAEYNSLKNEIDNIQIKFSIMFIFIALLLLFVAINFGVLFTAKIVKPIKKLVTATDKVKDGDLTVQVPENEVDKDEIGTLYAAFNRMIKQLSRQQRDLVIAQRAMAWSDVAKKVAHEIKNPLTPILLASERLLKKFSSEINEKSEFESYLKMIIRHTNDIKNIVSEFVLFARLPAPKFTKSELVYLVKHIIEARKLLNDNIVYTYDSNVDQFDFMCDATQINQVMINVLKNAEESIEGQEFGKIDVILDAKDDFISVIVMDNGKGFPPELIGKATESYVTTSSKGMGVGLAIVKRIVEEHCGVLDIANREDEGAIIDIKFDLKELHLKVRRSGG.

The next 4 membrane-spanning stretches (helical) occupy residues 17-37 (ILIL…FYVI), 44-64 (FSTI…LGIL), 85-105 (IVIA…VFSV), and 285-305 (IMFI…GVLF). One can recognise an HAMP domain in the interval 307–361 (AKIVKPIKKLVTATDKVKDGDLTVQVPENEVDKDEIGTLYAAFNRMIKQLSRQQR). A Histidine kinase domain is found at 378–589 (KVAHEIKNPL…IIDIKFDLKE (212 aa)). H381 is modified (phosphohistidine; by autocatalysis).

The protein resides in the cell membrane. It carries out the reaction ATP + protein L-histidine = ADP + protein N-phospho-L-histidine.. Member of the two-component regulatory system RP614/RP562. The polypeptide is Putative sensor histidine kinase NtrY-like (Rickettsia prowazekii (strain Madrid E)).